Reading from the N-terminus, the 826-residue chain is Beta-galactosidase 7 (826 aa).

Residues 1 to 25 (MKMKHFTRLLSLFFILITSLSLAKS) form the signal peptide. N-linked (GlcNAc...) asparagine glycosylation occurs at asparagine 154. Residue glutamate 184 is the Proton donor of the active site. The Nucleophile role is filled by glutamate 253. N-linked (GlcNAc...) asparagine glycans are attached at residues asparagine 254, asparagine 351, asparagine 380, asparagine 491, asparagine 665, asparagine 706, asparagine 797, and asparagine 801. Residues 740 to 826 (AHEHNKVELS…PKKLAVELEC (87 aa)) form the SUEL-type lectin domain.

The protein belongs to the glycosyl hydrolase 35 family. In terms of tissue distribution, expressed in flowers.

It is found in the secreted. Its subcellular location is the extracellular space. The protein resides in the apoplast. The catalysed reaction is Hydrolysis of terminal non-reducing beta-D-galactose residues in beta-D-galactosides.. This chain is Beta-galactosidase 7 (BGAL7), found in Arabidopsis thaliana (Mouse-ear cress).